A 237-amino-acid polypeptide reads, in one-letter code: MLTRKQYDLLRFIHERLKETGVPPSFDEMKEALDLRSKSGIHRLITALEERGFIRRLPNRARALEVVRLPDSVAPGLATPRSASRGFSPSVIEGSLGKVRPAADDDEGAGQVVTVPVMGRIAAGSPISAIQTRSHTLNIPPEMLGSGEHFALEVRGDSMIEAGILDGDTVLIRKCDTADTGDIIVALVDDEEATLKRLRKKGASIALEAANPAYETRIFGPDRVRIQGRLIGLMRRY.

Residues 26–46 (FDEMKEALDLRSKSGIHRLIT) constitute a DNA-binding region (H-T-H motif). Residues serine 158 and lysine 196 each act as for autocatalytic cleavage activity in the active site.

It belongs to the peptidase S24 family. In terms of assembly, homodimer.

It carries out the reaction Hydrolysis of Ala-|-Gly bond in repressor LexA.. Functionally, represses a number of genes involved in the response to DNA damage (SOS response), including recA and lexA. In the presence of single-stranded DNA, RecA interacts with LexA causing an autocatalytic cleavage which disrupts the DNA-binding part of LexA, leading to derepression of the SOS regulon and eventually DNA repair. The sequence is that of LexA repressor from Xanthobacter autotrophicus (strain ATCC BAA-1158 / Py2).